Reading from the N-terminus, the 199-residue chain is MVKMLVLYYSAYGHMEQMAKAAAEGAREGGAEVTLKRVPELVPEEVAKASHYKIDQEAPIATPGELADYDAIIIGTATRYGMMASQMKNFLDQTGGLWAKGALINKVGSVMVSTATQHGGAELALISTQWQMQHHGMIIVPLSYAYREQMGNDVVRGGAPYGMTTTADGDGSRQPSAQELDDARFQGRRVAEITAKLHG.

In terms of domain architecture, Flavodoxin-like spans 4–190; it reads MLVLYYSAYG…DDARFQGRRV (187 aa). FMN is bound by residues 10–15 and 78–80; these read SAYGHM and TRY. Tyrosine 12 provides a ligand contact to NAD(+). Tryptophan 98 lines the substrate pocket. FMN-binding positions include 113-119 and histidine 134; that span reads STATQHG. Positions 158-181 are disordered; that stretch reads GAPYGMTTTADGDGSRQPSAQELD. Polar residues predominate over residues 163–177; sequence MTTTADGDGSRQPSA.

It belongs to the WrbA family. Requires FMN as cofactor.

It carries out the reaction a quinone + NADH + H(+) = a quinol + NAD(+). It catalyses the reaction a quinone + NADPH + H(+) = a quinol + NADP(+). The chain is NAD(P)H dehydrogenase (quinone) from Brucella ovis (strain ATCC 25840 / 63/290 / NCTC 10512).